A 394-amino-acid polypeptide reads, in one-letter code: Obg-like ATPase 1 (394 aa).

The OBG-type G domain occupies 25–282 (LKIGIVGLPN…MPPDEAAKYC (258 aa)). ATP contacts are provided by residues 34-39 (NVGKST), 56-60 (FCTID), and 94-97 (DIAG). 2 residues coordinate Mg(2+): serine 38 and threonine 58. Residue phenylalanine 129 coordinates GTP. ATP-binding positions include 230 to 231 (NM), methionine 231, and 263 to 265 (SCA). 263–265 (SCA) contacts GTP. In terms of domain architecture, TGS spans 303–386 (HLIYFFTAGP…QDADIIFFKF (84 aa)).

The protein belongs to the TRAFAC class OBG-HflX-like GTPase superfamily. OBG GTPase family. YchF/OLA1 subfamily. As to quaternary structure, monomer (Potential). Interacts with GAP1. Mg(2+) is required as a cofactor.

The protein resides in the cytoplasm. It is found in the cell membrane. The protein localises to the cytosol. Its activity is regulated as follows. Activated by GAP1. Hydrolyzes ATP, and can also hydrolyze GTP with lower efficiency. Has lower affinity for GTP (Potential). Exhibits GTPase activity. Exhibits similar binding affinities and hydrolytic activities toward both GTP and ATP. Binds to the 26 S ribosomal RNA in vitro, but not to the 5.8 S or 18 S rRNA. Confers sensitivity to salinity stress by suppressing the anti-oxidation enzymatic activities and increasing lipid peroxidation thus leading to the accumulation of reactive oxygen species (ROS). The protein is Obg-like ATPase 1 of Oryza sativa subsp. indica (Rice).